Here is a 332-residue protein sequence, read N- to C-terminus: D-xylose-binding periplasmic protein (332 aa).

An N-terminal signal peptide occupies residues 1-23 (MKIKSALLTLVGALTVFSSSAHS).

This sequence belongs to the bacterial solute-binding protein 2 family.

The protein localises to the periplasm. Functionally, involved in the high-affinity D-xylose membrane transport system. Binds with high affinity to xylose. This is D-xylose-binding periplasmic protein (xylF) from Haemophilus influenzae (strain ATCC 51907 / DSM 11121 / KW20 / Rd).